Here is a 466-residue protein sequence, read N- to C-terminus: Ras GTPase-activating protein-binding protein 1 (466 aa).

In terms of domain architecture, NTF2 spans 11–133; that stretch reads VGREFVRQYY…FYVHNDIFRY (123 aa). Residues Lys-36, Lys-50, Lys-59, Lys-64, Lys-76, and Lys-123 each participate in a glycyl lysine isopeptide (Lys-Gly) (interchain with G-Cter in ubiquitin) cross-link. Residues 142-225 form an acidic disordered region region; sequence VTEPQEESEE…EPVLEETVPE (84 aa). At Thr-143 the chain carries Phosphothreonine. 2 disordered regions span residues 144 to 172 and 184 to 243; these read EPQE…DSGT and EEHL…QTVQ. 2 stretches are compositionally biased toward acidic residues: residues 145–157 and 185–206; these read PQEE…EEPE and EHLE…EQEP. Ser-149 carries the phosphoserine modification. A phosphoserine mark is found at Ser-231, Ser-232, Ser-250, and Ser-253. The disordered stretch occupies residues 255–329; it reads TSKNLPPSGA…REAGEQGDIE (75 aa). 2 stretches are compositionally biased toward basic and acidic residues: residues 297–307 and 318–329; these read PQRDQRVREQR and PIREAGEQGDIE. The region spanning 340-415 is the RRM domain; that stretch reads HQLFIGNLPH…VRLNVEEKKT (76 aa). Glycyl lysine isopeptide (Lys-Gly) (interchain with G-Cter in ubiquitin) cross-links involve residues Lys-353 and Lys-357. Residue Ser-373 is modified to Phosphoserine. A Glycyl lysine isopeptide (Lys-Gly) (interchain with G-Cter in ubiquitin) cross-link involves residue Lys-376. Position 376 is an N6-acetyllysine; alternate (Lys-376). Lys-376 is covalently cross-linked (Glycyl lysine isopeptide (Lys-Gly) (interchain with G-Cter in SUMO2); alternate). A Glycyl lysine isopeptide (Lys-Gly) (interchain with G-Cter in ubiquitin); alternate cross-link involves residue Lys-393. The RG-rich region stretch occupies residues 410 to 466; it reads VEEKKTRAAREGDRRDNRLRGPGGPRGGLGGGMRGPPRGGMVQKPGFGVGRGLAPRQ. Basic and acidic residues predominate over residues 413–428; the sequence is KKTRAAREGDRRDNRL. A disordered region spans residues 413 to 466; it reads KKTRAAREGDRRDNRLRGPGGPRGGLGGGMRGPPRGGMVQKPGFGVGRGLAPRQ. At Arg-429 the chain carries Asymmetric dimethylarginine. Positions 430-447 are enriched in gly residues; that stretch reads GPGGPRGGLGGGMRGPPR. Arg-435 is subject to Asymmetric dimethylarginine; alternate. An omega-N-methylarginine; alternate mark is found at Arg-435, Arg-447, Arg-460, and Arg-465. Arg-460 carries the post-translational modification Dimethylated arginine; alternate.

In terms of assembly, homodimer and oligomer. Component of a TAU mRNP complex, at least composed of IGF2BP1, ELAVL4 and G3BP1. Binds to the SH3 domain of Ras GTPase-activating protein (RASA1) in proliferating cells. No interaction in quiescent cells. Interacts (via NTF2 domain) with USP10; inhibiting stress granule formation by lowering G3BP1 valence. Interacts (via NTF2 domain) with CAPRIN1; promoting stress granule formation by lowering the saturation-concentration of G3BP1. Interacts (via NTF2 domain) with UBAP2L; promoting stress granule formation. Associates (via RG-rich region) with 40S ribosome subunits. Interacts with RPTOR and SPAG5; this complex is increased by oxidative stress. Interacts with ATXN2L. Interacts with STYXL1. Interacts with CGAS (via N-terminus); this interaction promotes the DNA-binding and activation of CGAS. Interacts (via C-terminus) with RIGI. Interacts with PABPC1. Interacts with QKI (isoforms QKI6 and QKI7); directing N(7)-methylguanine-containing mRNAs to stress granules. Mg(2+) serves as cofactor. Post-translationally, phosphorylation of the acidic disordered region regulates stress granule assembly. RASA1-dependent phosphorylation of Ser-149 induces a conformational change that prevents self-association. Dephosphorylation after HRAS activation is required for stress granule assembly. Ser-149 phosphorylation induces partial nuclear localization. In terms of processing, arg-435 is dimethylated, probably to asymmetric dimethylarginine. Ubiquitinated by TRIM21 via 'Lys-63'-linked polyubiquitination in the NTF2 domain in response to heat shock, leading to stress granule disassembly: ubiquitination promotes interaction with the FAF2 adapter, followed by interaction with VCP, which extracts G3BP1 from stress granules, leading to stress granule disassembly. In case of prolonged stress, ubiquitination by TRIM21 leads to autophagy-dependent degradation of G3BP1 via recruitment of ubiquitinated G3BP1 by SQSTM1 and/or CALCOCO2 to autophagosomes.

Its subcellular location is the cytoplasm. It localises to the cytosol. The protein resides in the perikaryon. It is found in the stress granule. The protein localises to the nucleus. The catalysed reaction is ATP + H2O = ADP + phosphate + H(+). Its activity is regulated as follows. Under physiological conditions, G3BP1 adopts a compact state that is stabilized by intramolecular interactions between the RG-rich and the acidic regions that inhibit phase separation. Upon stress, polysomes disassemble and mRNAs are released in an unfolded protein-free state. Binding of unfolded mRNA to G3BP1 outcompetes the intramolecular interactions and RNA-bound G3BP1 adopts an expanded conformation in which the RG-rich region becomes exposed to engage in protein-protein and protein-RNA interactions, allowing physical cross-linking of RNA molecules to form protein-RNA condensates, leading to liquid-liquid phase separation (LLPS). Protein involved in various processes, such as stress granule formation and innate immunity. Plays an essential role in stress granule formation. Stress granules are membraneless compartments that store mRNAs and proteins, such as stalled translation pre-initiation complexes, in response to stress. Promotes formation of stress granules phase-separated membraneless compartment by undergoing liquid-liquid phase separation (LLPS) upon unfolded RNA-binding: functions as a molecular switch that triggers RNA-dependent LLPS in response to a rise in intracellular free RNA concentrations. Also acts as an ATP- and magnesium-dependent helicase: unwinds DNA/DNA, RNA/DNA, and RNA/RNA substrates with comparable efficiency. Acts unidirectionally by moving in the 5' to 3' direction along the bound single-stranded DNA. Unwinds preferentially partial DNA and RNA duplexes having a 17 bp annealed portion and either a hanging 3' tail or hanging tails at both 5'- and 3'-ends. Plays an essential role in innate immunity by promoting CGAS and RIGI activity. Participates in the DNA-triggered cGAS/STING pathway by promoting the DNA binding and activation of CGAS. Triggers the condensation of cGAS, a process probably linked to the formation of membrane-less organelles. Also enhances RIGI-induced type I interferon production probably by helping RIGI at sensing pathogenic RNA. May also act as a phosphorylation-dependent sequence-specific endoribonuclease in vitro: Cleaves exclusively between cytosine and adenine and cleaves MYC mRNA preferentially at the 3'-UTR. In Pongo abelii (Sumatran orangutan), this protein is Ras GTPase-activating protein-binding protein 1 (G3BP1).